The primary structure comprises 522 residues: MSQDLQKEVASRKTFAIISHPDAGKTTITEQLLLFGGVIRSAGTVKGKKSGKFATSDWMEIEKQRGISVTSSVMQFDYNGSRINILDTPGHSDFSEDTYRTLMAVDSAVMVIDAAKGIEAQTLKLFKVCRMRGIPIFTFINKMDRQGKMPLELLAELEEVLGIESYPMNWPIGMGKELAGIYDRYHRVIEQYRSEEDERFLPLGEDGDLKEVHAIQKSLYYDQALEEIMLLDEAGNDFSRERIIAGEQTPVFFGSALTNFGVETFLRTFVDFAPSPSSHESNEGVIEADNPKFSGFIFKIQANMNPAHRDRIAFIRICSGEFERGMNVTLTRTGKSMKLANSTQFMADDRETVNRAVAGDIIGLYDTGNYQIGDTITNGSKKLEFEKLPQFTPELFMRVYAKNVMKQKHFHKGVEQLVQEGAIQLFKTWRTEEYIIGAVGQLQFEVFEHRMRGEYNSEIRMEPIGKKIARWVKEEDADEKLSTARSMLVKDRFDQPLFLFENEFAINWFNDKNPDIELTSLL.

In terms of domain architecture, tr-type G spans 10–277; the sequence is ASRKTFAIIS…TFVDFAPSPS (268 aa). GTP is bound by residues 19–26, 87–91, and 141–144; these read SHPDAGKT, DTPGH, and NKMD.

Belongs to the TRAFAC class translation factor GTPase superfamily. Classic translation factor GTPase family. PrfC subfamily.

Its subcellular location is the cytoplasm. In terms of biological role, increases the formation of ribosomal termination complexes and stimulates activities of RF-1 and RF-2. It binds guanine nucleotides and has strong preference for UGA stop codons. It may interact directly with the ribosome. The stimulation of RF-1 and RF-2 is significantly reduced by GTP and GDP, but not by GMP. The protein is Peptide chain release factor 3 of Listeria innocua serovar 6a (strain ATCC BAA-680 / CLIP 11262).